A 406-amino-acid chain; its full sequence is Enoyl-[acyl-carrier-protein] reductase [NADH] (406 aa).

NAD(+)-binding positions include 48-53, 74-75, 111-112, and 140-141; these read GASTGF, FE, DA, and IA. Tyrosine 226 is a binding site for substrate. Catalysis depends on tyrosine 236, which acts as the Proton donor. NAD(+)-binding positions include lysine 245 and 275–277; that span reads LVT.

The protein belongs to the TER reductase family. As to quaternary structure, monomer.

It catalyses the reaction a 2,3-saturated acyl-[ACP] + NAD(+) = a (2E)-enoyl-[ACP] + NADH + H(+). Its pathway is lipid metabolism; fatty acid biosynthesis. Its function is as follows. Involved in the final reduction of the elongation cycle of fatty acid synthesis (FAS II). Catalyzes the reduction of a carbon-carbon double bond in an enoyl moiety that is covalently linked to an acyl carrier protein (ACP). The sequence is that of Enoyl-[acyl-carrier-protein] reductase [NADH] from Coxiella burnetii (strain RSA 331 / Henzerling II).